The chain runs to 393 residues: MKLAKRVSALTPSTTLAITAKAKELKAAGHDVIGLGAGEPDFNTPQHIIDAAVRSMNEGHTKYTPSGGLAELKNSIAEKFKRDQNIEYKPSQIIVCTGAKHALYTLFQVILDEEDEVIIPTPYWVSYPEQVKLAGGKPVYVEGLEENHFKISPEQLKNAITEKTKAIVINSPSNPTGVMYTEEELSALGEVCLEHDILIVSDEIYEKLTYGGKKHVSIAQLSDRLKEQTVIINGVSKSHSMTGWRIGYAAGSEDIIKAMTNLASHSTSNPTSIAQYGAIAAYNGPSEPLEEMREAFEHRLNTIYAKLIEIPGFSCVKPEGAFYLFPNAKEAAQSCGFKDVDEFVKALLEEEKVAIVPGSGFGSPENVRLSYATSLDLLEEAIERIKRFVEKHS.

L-aspartate contacts are provided by Gly38, Trp124, and Asn174. Lys237 is modified (N6-(pyridoxal phosphate)lysine).

This sequence belongs to the class-I pyridoxal-phosphate-dependent aminotransferase family. As to quaternary structure, homodimer. Requires pyridoxal 5'-phosphate as cofactor.

It is found in the cytoplasm. It carries out the reaction L-aspartate + 2-oxoglutarate = oxaloacetate + L-glutamate. This is Aspartate aminotransferase (aspB) from Bacillus subtilis (strain 168).